A 364-amino-acid polypeptide reads, in one-letter code: Chorismate synthase (364 aa).

Arg-48 is a binding site for NADP(+). Residues 126–128 (RSS), Gly-288, 303–307 (KPIAS), and Arg-329 contribute to the FMN site.

This sequence belongs to the chorismate synthase family. Homotetramer. FMNH2 is required as a cofactor.

It catalyses the reaction 5-O-(1-carboxyvinyl)-3-phosphoshikimate = chorismate + phosphate. Its pathway is metabolic intermediate biosynthesis; chorismate biosynthesis; chorismate from D-erythrose 4-phosphate and phosphoenolpyruvate: step 7/7. Its function is as follows. Catalyzes the anti-1,4-elimination of the C-3 phosphate and the C-6 proR hydrogen from 5-enolpyruvylshikimate-3-phosphate (EPSP) to yield chorismate, which is the branch point compound that serves as the starting substrate for the three terminal pathways of aromatic amino acid biosynthesis. This reaction introduces a second double bond into the aromatic ring system. This Desulfovibrio desulfuricans (strain ATCC 27774 / DSM 6949 / MB) protein is Chorismate synthase.